Consider the following 851-residue polypeptide: Probable disease resistance protein At1g15890 (851 aa).

One can recognise an NB-ARC domain in the interval 139–441 (AEKIPAPKVE…CEGFIDGNED (303 aa)). 181–188 (GMGGVGKT) contacts ATP. 5 LRR repeats span residues 514-535 (SLRRMSLMCNQIANISSSSNSP), 536-557 (NLSTLLLQNNKLVHISCDFFRF), 560-582 (ALVVLDLSRNSSLSSLPEAISKL), 584-605 (SLQYINLSTTGIKWLPVSFKEL), and 607-629 (KLIHLNLEFTDELESIVGIATSL).

The protein belongs to the disease resistance NB-LRR family.

Probable disease resistance protein. In Arabidopsis thaliana (Mouse-ear cress), this protein is Probable disease resistance protein At1g15890.